Consider the following 121-residue polypeptide: Large ribosomal subunit protein uL3 (121 aa).

Gln62 bears the N5-methylglutamine mark.

It belongs to the universal ribosomal protein uL3 family. As to quaternary structure, part of the 50S ribosomal subunit. Forms a cluster with proteins L14 and L19. Methylated by PrmB.

In terms of biological role, one of the primary rRNA binding proteins, it binds directly near the 3'-end of the 23S rRNA, where it nucleates assembly of the 50S subunit. The polypeptide is Large ribosomal subunit protein uL3 (rplC) (Aggregatibacter actinomycetemcomitans (Actinobacillus actinomycetemcomitans)).